A 233-amino-acid polypeptide reads, in one-letter code: N-(5'-phosphoribosyl)anthranilate isomerase (233 aa).

Belongs to the TrpF family.

It catalyses the reaction N-(5-phospho-beta-D-ribosyl)anthranilate = 1-(2-carboxyphenylamino)-1-deoxy-D-ribulose 5-phosphate. It functions in the pathway amino-acid biosynthesis; L-tryptophan biosynthesis; L-tryptophan from chorismate: step 3/5. The sequence is that of N-(5'-phosphoribosyl)anthranilate isomerase from Synechococcus sp. (strain JA-2-3B'a(2-13)) (Cyanobacteria bacterium Yellowstone B-Prime).